Consider the following 707-residue polypeptide: MKDTPLQVHVLLGLAITTLVQAIDKKVDCPQLCTCEIRPWFTPRSIYMEASTVDCNDLGLLNFPARLPADTQILLLQTNNIARIEHSTDFPVNLTGLDLSQNNLSSVTNINVQKMSQLLSVYLEENKLTELPEKCLYGLSNLQELYVNHNLLSTISPGAFIGLHNLLRLHLNSNRLQMINSQWFDALPNLEILMLGDNPIIRIKDMNFQPLVKLRSLVIAGINLTEIPDDALAGLENLESISFYDNRLSKVPQVALQKAVNLKFLDLNKNPINRIRRGDFSNMLHLKELGINNMPELVSIDSLAVDNLPDLRKIEATNNPRLSYIHPNAFFRLPKLESLMLNTNALSALYHGTIESLPNLKEISIHSNPIRCDCVIRWINMNKTNIRFMEPDSLFCVDPPEFQGQNVRQVHFRDMMEICLPLIAPESFPSDLDVEADSYVSLHCRATAEPQPEIYWITPSGKKLLPNTMREKFYVHSEGTLEIRGITPKEGGLYTCIATNLVGADLKSIMIKVGGSVPQDNNGSLNIKIRDIRANSVLVSWKASSKILKSSVKWTAFVKTEDSHAAQSARIPFDVKVYNLTHLKPSTEYKICIDIPTVYQKSRKQCVNVTTKSLEHDGKEYGKNHTVFVACVGGLLGIIGVMCLFSCVSQEGSSEGEHSYAVNHCHKPALAFSELYPPLINLWESSKEKRATLEVKATAIGVPTNMS.

The first 22 residues, 1–22 (MKDTPLQVHVLLGLAITTLVQA), serve as a signal peptide directing secretion. Residues 23–69 (IDKKVDCPQLCTCEIRPWFTPRSIYMEASTVDCNDLGLLNFPARLPA) enclose the LRRNT domain. Over 23–626 (IDKKVDCPQL…DGKEYGKNHT (604 aa)) the chain is Extracellular. 12 LRR repeats span residues 70–91 (DTQILLLQTNNIARIEHSTDFP), 93–114 (NLTGLDLSQNNLSSVTNINVQK), 117–138 (QLLSVYLEENKLTELPEKCLYG), 141–162 (NLQELYVNHNLLSTISPGAFIG), 165–186 (NLLRLHLNSNRLQMINSQWFDA), 189–210 (NLEILMLGDNPIIRIKDMNFQP), 213–234 (KLRSLVIAGINLTEIPDDALAG), 237–258 (NLESISFYDNRLSKVPQVALQK), 261–282 (NLKFLDLNKNPINRIRRGDFSN), 285–304 (HLKELGINNMPELVSIDSLA), 310–332 (DLRKIEATNNPRLSYIHPNAFFR), and 335–358 (KLESLMLNTNALSALYHGTIESLP). N-linked (GlcNAc...) asparagine glycosylation is found at Asn-93 and Asn-103. Asn-223 carries N-linked (GlcNAc...) asparagine glycosylation. The region spanning 368 to 421 (NPIRCDCVIRWINMNKTNIRFMEPDSLFCVDPPEFQGQNVRQVHFRDMMEICLP) is the LRRCT domain. A glycan (N-linked (GlcNAc...) asparagine) is linked at Asn-382. Positions 421-514 (PLIAPESFPS…DLKSIMIKVG (94 aa)) constitute an Ig-like C2-type domain. A disulfide bridge connects residues Cys-444 and Cys-496. Residues Asn-522, Asn-579, Asn-608, and Asn-624 are each glycosylated (N-linked (GlcNAc...) asparagine). Residues 523–614 (GSLNIKIRDI…QCVNVTTKSL (92 aa)) enclose the Fibronectin type-III domain. Residues 627–647 (VFVACVGGLLGIIGVMCLFSC) traverse the membrane as a helical segment. At 648 to 707 (VSQEGSSEGEHSYAVNHCHKPALAFSELYPPLINLWESSKEKRATLEVKATAIGVPTNMS) the chain is on the cytoplasmic side.

As to expression, expressed in the brain, in Stronger expression in the ventricular zone and anlage of thalamus, spinal cord, and dorsal root ganglion in 11-17 dpc cerebellum and cerebral cortex in adults.

The protein localises to the membrane. The protein is Leucine-rich repeat neuronal protein 3 (Lrrn3) of Mus musculus (Mouse).